The chain runs to 329 residues: Delta-aminolevulinic acid dehydratase (329 aa).

The active-site Schiff-base intermediate with substrate is Lys202. Positions 212 and 223 each coordinate 5-aminolevulinate. A Mg(2+)-binding site is contributed by Glu239. Catalysis depends on Lys254, which acts as the Schiff-base intermediate with substrate. Residues Ser280 and Tyr319 each contribute to the 5-aminolevulinate site.

It belongs to the ALAD family. Homooctamer.

It catalyses the reaction 2 5-aminolevulinate = porphobilinogen + 2 H2O + H(+). It participates in porphyrin-containing compound metabolism; protoporphyrin-IX biosynthesis; coproporphyrinogen-III from 5-aminolevulinate: step 1/4. Functionally, catalyzes an early step in the biosynthesis of tetrapyrroles. Binds two molecules of 5-aminolevulinate per subunit, each at a distinct site, and catalyzes their condensation to form porphobilinogen. The sequence is that of Delta-aminolevulinic acid dehydratase (hemB) from Mycobacterium leprae (strain TN).